We begin with the raw amino-acid sequence, 471 residues long: Ribosomal protein uS12 methylthiotransferase RimO (471 aa).

The MTTase N-terminal domain maps to 19–134 (PRVGFVSLGC…VMNAVHTHLP (116 aa)). Cysteine 28, cysteine 64, cysteine 93, cysteine 169, cysteine 173, and cysteine 176 together coordinate [4Fe-4S] cluster. Positions 155 to 396 (LTPRHYAYLK…MAVAEEVSTA (242 aa)) constitute a Radical SAM core domain. In terms of domain architecture, TRAM spans 399–471 (QKRVGQTMQV…QGHDLVGQPV (73 aa)).

It belongs to the methylthiotransferase family. RimO subfamily. [4Fe-4S] cluster serves as cofactor.

It localises to the cytoplasm. It catalyses the reaction L-aspartate(89)-[ribosomal protein uS12]-hydrogen + (sulfur carrier)-SH + AH2 + 2 S-adenosyl-L-methionine = 3-methylsulfanyl-L-aspartate(89)-[ribosomal protein uS12]-hydrogen + (sulfur carrier)-H + 5'-deoxyadenosine + L-methionine + A + S-adenosyl-L-homocysteine + 2 H(+). Its function is as follows. Catalyzes the methylthiolation of an aspartic acid residue of ribosomal protein uS12. This is Ribosomal protein uS12 methylthiotransferase RimO from Delftia acidovorans (strain DSM 14801 / SPH-1).